The following is a 157-amino-acid chain: Small ribosomal subunit protein uS7 (157 aa).

It belongs to the universal ribosomal protein uS7 family. As to quaternary structure, part of the 30S ribosomal subunit. Contacts proteins S9 and S11.

In terms of biological role, one of the primary rRNA binding proteins, it binds directly to 16S rRNA where it nucleates assembly of the head domain of the 30S subunit. Is located at the subunit interface close to the decoding center, probably blocks exit of the E-site tRNA. This is Small ribosomal subunit protein uS7 from Acidovorax ebreus (strain TPSY) (Diaphorobacter sp. (strain TPSY)).